The primary structure comprises 406 residues: Lymphocyte transmembrane adapter 1 (406 aa).

The segment at M1–G25 is disordered. The Extracellular portion of the chain corresponds to M1–H33. The chain crosses the membrane as a helical; Signal-anchor for type III membrane protein span at residues L34–I54. The Cytoplasmic segment spans residues L55 to V406. The segment at E109 to Q131 is disordered. Residue Y184 is modified to Phosphotyrosine. Residues A219 to D258 are disordered. Over residues G242–D258 the composition is skewed to low complexity. Phosphotyrosine is present on residues Y259, Y285, and Y352. The interval P358 to V406 is disordered.

As to quaternary structure, when phosphorylated, interacts with GRB2, PIK3R1 and GRAP2. Post-translationally, phosphorylated on tyrosines upon TCR or BCR activation; which leads to the recruitment of GRB2, PIK3R1 and GRAP2.

The protein localises to the cell membrane. In terms of biological role, negatively regulates TCR (T-cell antigen receptor)-mediated signaling in T-cells and BCR (B-cell antigen receptor)-mediated signaling in B-cells. The sequence is that of Lymphocyte transmembrane adapter 1 (Lax1) from Rattus norvegicus (Rat).